Consider the following 224-residue polypeptide: Cytidylate kinase (224 aa).

Residue 9-17 participates in ATP binding; the sequence is GPSGSGKGT.

It belongs to the cytidylate kinase family. Type 1 subfamily.

It is found in the cytoplasm. The enzyme catalyses CMP + ATP = CDP + ADP. It catalyses the reaction dCMP + ATP = dCDP + ADP. The chain is Cytidylate kinase from Saccharophagus degradans (strain 2-40 / ATCC 43961 / DSM 17024).